A 487-amino-acid polypeptide reads, in one-letter code: Probable UDP-N-acetylglucosamine pyrophosphorylase (487 aa).

The short motif at 105-108 (LAGG) is the Substrate binding element. UTP contacts are provided by residues 105 to 108 (LAGG), K119, Q198, and G225. Position 226 (N226) interacts with substrate. D256 contacts UTP. Positions 307-308 (EY) match the Substrate binding motif. Residue K382 coordinates UTP. K412 is a substrate binding site.

This sequence belongs to the UDPGP type 1 family.

It localises to the cytoplasm. The enzyme catalyses N-acetyl-alpha-D-glucosamine 1-phosphate + UTP + H(+) = UDP-N-acetyl-alpha-D-glucosamine + diphosphate. The protein operates within nucleotide-sugar biosynthesis; UDP-N-acetyl-alpha-D-glucosamine biosynthesis; UDP-N-acetyl-alpha-D-glucosamine from N-acetyl-alpha-D-glucosamine 1-phosphate: step 1/1. The protein is Probable UDP-N-acetylglucosamine pyrophosphorylase (uap1) of Dictyostelium discoideum (Social amoeba).